A 211-amino-acid polypeptide reads, in one-letter code: Holliday junction branch migration complex subunit RuvA (211 aa).

Positions 1 to 63 are domain I; that stretch reads MIASLRGTVI…EDSQTLYVFK (63 aa). Residues 64–142 are domain II; it reads DADEKRAFAT…DLGEIADTGA (79 aa). The tract at residues 143 to 157 is flexible linker; it reads VGAAGAVGDGGDGQA. The domain III stretch occupies residues 158–211; it reads VAPDVREQVLEALVGLGFTESKAGTTIEAVLSQWSAPQAPDASGLLRASLAAIK.

It belongs to the RuvA family. Homotetramer. Forms an RuvA(8)-RuvB(12)-Holliday junction (HJ) complex. HJ DNA is sandwiched between 2 RuvA tetramers; dsDNA enters through RuvA and exits via RuvB. An RuvB hexamer assembles on each DNA strand where it exits the tetramer. Each RuvB hexamer is contacted by two RuvA subunits (via domain III) on 2 adjacent RuvB subunits; this complex drives branch migration. In the full resolvosome a probable DNA-RuvA(4)-RuvB(12)-RuvC(2) complex forms which resolves the HJ.

It is found in the cytoplasm. Functionally, the RuvA-RuvB-RuvC complex processes Holliday junction (HJ) DNA during genetic recombination and DNA repair, while the RuvA-RuvB complex plays an important role in the rescue of blocked DNA replication forks via replication fork reversal (RFR). RuvA specifically binds to HJ cruciform DNA, conferring on it an open structure. The RuvB hexamer acts as an ATP-dependent pump, pulling dsDNA into and through the RuvAB complex. HJ branch migration allows RuvC to scan DNA until it finds its consensus sequence, where it cleaves and resolves the cruciform DNA. This chain is Holliday junction branch migration complex subunit RuvA, found in Corynebacterium jeikeium (strain K411).